Consider the following 141-residue polypeptide: Hemoglobin subunit alpha (141 aa).

Positions valine 1–arginine 141 constitute a Globin domain. Serine 3 carries the phosphoserine modification. An N6-succinyllysine mark is found at lysine 7 and lysine 11. Lysine 16 carries the post-translational modification N6-acetyllysine; alternate. Residue lysine 16 is modified to N6-succinyllysine; alternate. Lysine 40 carries the N6-succinyllysine modification. Serine 49 carries the phosphoserine modification. Residue histidine 58 participates in O2 binding. Histidine 87 is a binding site for heme b. A Phosphoserine modification is found at serine 102. The residue at position 108 (threonine 108) is a Phosphothreonine. At serine 124 the chain carries Phosphoserine. Phosphothreonine occurs at positions 134 and 137. Serine 138 carries the post-translational modification Phosphoserine.

Belongs to the globin family. In terms of assembly, heterotetramer of two alpha chains and two beta chains. In terms of tissue distribution, red blood cells.

Its function is as follows. Involved in oxygen transport from the lung to the various peripheral tissues. Functionally, hemopressin acts as an antagonist peptide of the cannabinoid receptor CNR1. Hemopressin-binding efficiently blocks cannabinoid receptor CNR1 and subsequent signaling. The chain is Hemoglobin subunit alpha (HBA) from Sus scrofa (Pig).